The primary structure comprises 3898 residues: Genome polyprotein (3898 aa).

The Peptidase C53 domain maps to 1–168; sequence MELNHFELLY…TDCPLWVTSC (168 aa). Active-site for N-terminal protease activity residues include Glu-22, His-49, and Cys-69. The interval 112–138 is zinc-binding TRASH domain; that stretch reads CEVTKRIGRVTGSDGKLYHIYVCIDGC. An N-linked (GlcNAc...) asparagine; by host glycan is attached at Asn-157. The disordered stretch occupies residues 221-242; that stretch reads KGKVKGKNTQDGLYHNKNKPPE. N-linked (GlcNAc...) asparagine; by host glycans are attached at residues Asn-269, Asn-278, and Asn-332. 2 disulfide bridges follow: Cys-305–Cys-349 and Cys-335–Cys-336. 2 N-linked (GlcNAc...) asparagine; by host glycosylation sites follow: Asn-362 and Asn-367. 2 disulfide bridges follow: Cys-377–Cys-422 and Cys-381–Cys-405. Asn-410, Asn-425, Asn-500, and Asn-594 each carry an N-linked (GlcNAc...) asparagine; by host glycan. Cys-693 and Cys-737 are oxidised to a cystine. N-linked (GlcNAc...) asparagine; by host glycosylation is found at Asn-805, Asn-810, Asn-874, Asn-918, and Asn-949. 9 helical membrane passes run 1031-1051, 1070-1090, 1104-1124, 1140-1164, 1189-1209, 1217-1237, 1247-1267, 1281-1301, and 1360-1380; these read FIVL…LIVT, VVLI…YFLL, ILLL…VALL, QRLP…MLLA, LSTD…TYIS, LLQY…LKGV, LPSY…AVVT, VPTL…ILIL, and TMLP…WQFI. Residues 1441–1589 enclose the Peptidase C74 domain; sequence KELIIKHKVR…DLEHLGWVLR (149 aa). Active-site for cysteine protease NS2 activity residues include His-1447, Glu-1461, and Cys-1512. The chain crosses the membrane as a helical span at residues 1568–1588; that stretch reads MLLVGNLGTEVGDLEHLGWVL. The Peptidase S31 domain occupies 1590–1763; the sequence is GPAVCKKVTE…LPIFEASSGR (174 aa). Residues His-1658 and Asp-1695 each act as charge relay system; for serine protease NS3 activity in the active site. An N-linked (GlcNAc...) asparagine; by host glycan is attached at Asn-1713. Residue Ser-1752 is the Charge relay system; for serine protease NS3 activity of the active site. Positions 1802 to 1960 constitute a Helicase ATP-binding domain; the sequence is ITTMNRGEFR…QKHPIEEYIA (159 aa). An ATP-binding site is contributed by 1815-1822; it reads LATGAGKT. Residues 1910–1913 carry the DEAH box motif; the sequence is DEYH. A Helicase C-terminal domain is found at 1978-2179; it reads GLKIPVEEMK…ELPMAVKNIM (202 aa). Residues Asn-2134, Asn-2217, Asn-2419, Asn-2494, Asn-2787, Asn-2815, and Asn-2891 are each glycosylated (N-linked (GlcNAc...) asparagine; by host). The segment covering 2968-2980 has biased composition (low complexity); sequence PTMTTGETPTTFT. The disordered stretch occupies residues 2968–2987; it reads PTMTTGETPTTFTSSGPDPK. N-linked (GlcNAc...) asparagine; by host glycosylation is found at Asn-3103, Asn-3211, and Asn-3316. Thr-3500 and Leu-3502 together coordinate GTP. Residues 3519-3642 form the RdRp catalytic domain; that stretch reads PVAVSFDTKA…ITERALGEKF (124 aa). N-linked (GlcNAc...) asparagine; by host glycosylation is present at Asn-3689. Position 3697 (Arg-3697) interacts with GTP. Asn-3698 carries an N-linked (GlcNAc...) asparagine; by host glycan. Lys-3705 serves as a coordination point for GTP. N-linked (GlcNAc...) asparagine; by host glycosylation occurs at Asn-3794.

Belongs to the pestivirus polyprotein family. Interacts (via N-terminus) with host SP1; this interaction induces proteasomal degradation of SP1 with subsequent down-regulation of HDAC1 and ISG15 expression thereby counteracting the host innate immunity. Interacts (via C-terminus) with host IRF3. As to quaternary structure, interacts with host OS9. In terms of assembly, homodimer; disulfide-linked. Interacts with host RPSA. Homodimer; disulfide-linked. Heterodimer with E1; disulfide-linked. As to quaternary structure, homodimer; disulfide-linked. Heterodimer with E1; disulfide-linked. Interacts with host TRX2. Interacts with host receptor ADAM17 (via metalloproteinase domain); this interaction allows binding and probably entry of the virus into the host cell. Interacts with host ANXA2; this interaction allows binding and probably entry of the virus into the host cell. Interacts with host MERTK; this interaction allows binding and probably entry of the virus into the host cell. In terms of assembly, interacts with host TRAF6; this interaction inhibits host NF-kappa-B pathway. Interacts with NS5B; this interaction enhances RNA-dependent RNA polymerase activity. Interacts with protein NS4A. Interacts with host RAB5, this interaction facilitates the formation of NS4B-related complex. Interacts with host FTH1; this interaction plays a positive role in viral anti-apoptosis. As to quaternary structure, interacts with RNA-directed RNA polymerase. Interacts with host RSAD2; this interaction inhibits viral replication. In terms of assembly, interacts with NS5A; this interaction promotes viral replication. In terms of processing, heavily glycosylated. Post-translationally, the viral RNA of pestiviruses is expressed as a single polyprotein which undergoes post-translational proteolytic processing resulting in the production of at least eleven individual proteins. The N-terminal protease cleaves itself from the nascent polyprotein autocatalytically and thereby generates the N-terminus of the adjacent viral capsid protein C. Cleavage between E2 and p7 is partial.

It is found in the virion. It localises to the host membrane. The protein localises to the virion membrane. The protein resides in the host cell surface. Its subcellular location is the host cytoplasm. The enzyme catalyses Leu is conserved at position P1 for all four cleavage sites. Alanine is found at position P1' of the NS4A-NS4B cleavage site, whereas serine is found at position P1' of the NS3-NS4A, NS4B-NS5A and NS5A-NS5B cleavage sites.. The catalysed reaction is RNA(n) + a ribonucleoside 5'-triphosphate = RNA(n+1) + diphosphate. It carries out the reaction a ribonucleoside 5'-triphosphate + H2O = a ribonucleoside 5'-diphosphate + phosphate + H(+). It catalyses the reaction ATP + H2O = ADP + phosphate + H(+). In terms of biological role, leader cysteine autoprotease that cleaves itself from the nascent polyprotein during translation of the viral mRNA. Once released, plays a role in the inhibition of host innate immune response by interacting with host IRF3 and inducing its proteasomal degradation. Packages viral RNA to form a viral nucleocapsid and thereby protects viral RNA. Also plays a role in transcription regulation. Protects the incoming virus against IFN-induced effectors. Its function is as follows. Plays a role in viral entry. Interacts with host RPSA that acts as a cellular attachment receptor for the virus. Also possesses intrinsic ribonuclease (RNase) activity that can inhibit the production of type I interferon and assist in the development of persistent infections. Cleaves preferentially NpU bonds. Binds to heparan sulfate on the host cells for entry. Functionally, plays a role in cell attachment and subsequent fusion of viral and cellular membranes. Therefore, mediates together with envelope glycoprotein E2 the viral entry. In terms of biological role, plays a role in cell attachment and subsequent fusion of viral and cellular membranes. Therefore, mediates together with envelope glycoprotein E1 the viral entry. Binds to host ADAM17 receptor for entry. Binds to host ANXA2 for entry. Binds to host MERTK for entry. Plays an essential role in the virus replication cycle by acting as a viroporin. Forms ion conductive pores, which alters the cell permeability allowing the transport of ions and other small molecules. Its function is as follows. Autoprotease that associates with the host chaperone JIV and cleaves the NS2-3 protein between NS2 and NS3. Also plays a role in the formation of infectious particles. Functionally, plays a role in the regulation of viral RNA replication. In terms of biological role, multifunctional protein that contains an N-terminal protease and a C-terminal helicase, playing essential roles in viral polyprotein processing and viral genome replication. The chymotrypsin-like serine protease activity utilizes NS4A as an essential cofactor and catalyzes the cleavage of the polyprotein leading to the release of NS4A, NS4B, NS5A, and NS5B. Plays a role in the inhibition of host NF-kappa-B activation by interacting with and inhibiting host TRAF6. Interacts with NS5B to enhance RNA-dependent RNA polymerase activity. Acts as a cofactor for the NS3 protease activity. Its function is as follows. Induces a specific membrane alteration that serves as a scaffold for the virus replication complex. Antagonizes host cell apoptosis by interacting with host ferritin heavy chain. The ORF4 protein physically binds host FTH1/FHC, resulting in the reduction of FTH1 protein levels in host cells. Reduction of FTH1 concentration further inhibits the accumulation of reactive oxygen in host cells, leading to reduced apoptosis. Functionally, regulates viral RNA replication by interacting with the 3'-untranslated region of viral RNA in a dose-dependent manner. At small concentrations promotes viral synthesis by interacting with the polymerase NS5B while at large concentrations, inhibits replication. In terms of biological role, replicates the viral (+) and (-) genome. The chain is Genome polyprotein from Sus scrofa (Pig).